Consider the following 179-residue polypeptide: uncharacterized protein (179 aa).

Residues 1 to 15 (MQRQTGHMEDKKRTG) are compositionally biased toward basic and acidic residues. The tract at residues 1–32 (MQRQTGHMEDKKRTGLESQGTENAFSDGRDGK) is disordered.

This is an uncharacterized protein from Gallus gallus (Chicken).